The primary structure comprises 329 residues: Tryptophan--tRNA ligase (329 aa).

Residues 9-11 and 17-18 each bind ATP; these read QPS and GN. A 'HIGH' region motif is present at residues 10-18; sequence PSGIPTIGN. Asp133 provides a ligand contact to L-tryptophan. Residues 145 to 147, Val184, and 193 to 197 contribute to the ATP site; these read GDD and KMSKS. Positions 193 to 197 match the 'KMSKS' region motif; it reads KMSKS.

The protein belongs to the class-I aminoacyl-tRNA synthetase family. Homodimer.

The protein resides in the cytoplasm. The catalysed reaction is tRNA(Trp) + L-tryptophan + ATP = L-tryptophyl-tRNA(Trp) + AMP + diphosphate + H(+). Its function is as follows. Catalyzes the attachment of tryptophan to tRNA(Trp). The chain is Tryptophan--tRNA ligase from Staphylococcus aureus (strain MSSA476).